A 126-amino-acid polypeptide reads, in one-letter code: Small ribosomal subunit protein uS13 (126 aa).

Residues 96–126 (LPVRGQQTKTNARTRKGRRKGTVANKKKVSK) are disordered. Residues 107–126 (ARTRKGRRKGTVANKKKVSK) are compositionally biased toward basic residues.

Belongs to the universal ribosomal protein uS13 family. Part of the 30S ribosomal subunit. Forms a loose heterodimer with protein S19. Forms two bridges to the 50S subunit in the 70S ribosome.

Its function is as follows. Located at the top of the head of the 30S subunit, it contacts several helices of the 16S rRNA. In the 70S ribosome it contacts the 23S rRNA (bridge B1a) and protein L5 of the 50S subunit (bridge B1b), connecting the 2 subunits; these bridges are implicated in subunit movement. Contacts the tRNAs in the A and P-sites. This is Small ribosomal subunit protein uS13 from Hydrogenobaculum sp. (strain Y04AAS1).